A 423-amino-acid chain; its full sequence is Methylenetetrahydrofolate--tRNA-(uracil-5-)-methyltransferase TrmFO 2 (423 aa).

8–13 (GAGLSG) is an FAD binding site.

Belongs to the MnmG family. TrmFO subfamily. FAD is required as a cofactor.

It localises to the cytoplasm. It carries out the reaction uridine(54) in tRNA + (6R)-5,10-methylene-5,6,7,8-tetrahydrofolate + NADH + H(+) = 5-methyluridine(54) in tRNA + (6S)-5,6,7,8-tetrahydrofolate + NAD(+). It catalyses the reaction uridine(54) in tRNA + (6R)-5,10-methylene-5,6,7,8-tetrahydrofolate + NADPH + H(+) = 5-methyluridine(54) in tRNA + (6S)-5,6,7,8-tetrahydrofolate + NADP(+). Catalyzes the folate-dependent formation of 5-methyl-uridine at position 54 (M-5-U54) in all tRNAs. This Mycoplasma capricolum subsp. capricolum (strain California kid / ATCC 27343 / NCTC 10154) protein is Methylenetetrahydrofolate--tRNA-(uracil-5-)-methyltransferase TrmFO 2.